The chain runs to 623 residues: Protein vein (623 aa).

An N-terminal signal peptide occupies residues 1-40; it reads MYAQHLRKWSLKTKKQLMPLILLIISYMLLLNTCVLSSSA. Disordered regions lie at residues 70 to 98, 130 to 162, 184 to 214, and 229 to 317; these read IPLSSDNGSGSSESSAESGSSSSRSSSNN, DAGSSTPAQQEQHVAAVPEQQQQQQQQQQSMQK, AASSKMRRHIQPSQLPHQPESRAQLPSNYSS, and PESM…QRYN. 2 stretches are compositionally biased toward low complexity: residues 72-98 and 136-158; these read LSSDNGSGSSESSAESGSSSSRSSSNN and PAQQEQHVAAVPEQQQQQQQQQQ. Asparagine 76 is a glycosylation site (N-linked (GlcNAc...) asparagine). A glycan (N-linked (GlcNAc...) asparagine) is linked at asparagine 211. Over residues 233–248 the composition is skewed to basic and acidic residues; the sequence is LEDRSPEQAARSRRDG. An N-linked (GlcNAc...) asparagine glycan is attached at asparagine 252. The span at 255–267 shows a compositional bias: low complexity; sequence RQQQRTGHRQQLQ. A compositionally biased stretch (basic residues) spans 305 to 316; the sequence is QRRKHQRKHQRY. N-linked (GlcNAc...) asparagine glycosylation is found at asparagine 350, asparagine 381, asparagine 424, asparagine 449, asparagine 521, and asparagine 574. The region spanning 457 to 542 is the Ig-like C2-type domain; that stretch reads TKIFSKPSKA…AKNKASKAIA (86 aa). Disulfide bonds link cysteine 478/cysteine 531, cysteine 566/cysteine 577, cysteine 571/cysteine 588, and cysteine 590/cysteine 599. The region spanning 561–599 is the EGF-like domain; that stretch reads ASGIPCNFDYCFHNGTCRMIPDINEVYCRCPTEYFGNRC.

It localises to the secreted. Functionally, ligand for the EGF receptor. Seems to play a role in the global proliferation of wing disc cells and the larval patterning. Shows a strong synergistic genetic interaction with spi, suggesting a molecular interdependence. Required for the development of interveins cells. This is Protein vein (vn) from Drosophila melanogaster (Fruit fly).